We begin with the raw amino-acid sequence, 336 residues long: Glutamyl endopeptidase (336 aa).

An N-terminal signal peptide occupies residues 1 to 29; sequence MKGKFLKVSSLFVATLTTATLVSSPAANA. Residues 30 to 68 constitute a propeptide that is removed on maturation; sequence LSSKAMDNHPQQTQSSKQQTPKIQKGGNLKPLEQREHAN. The tract at residues 34–61 is disordered; it reads AMDNHPQQTQSSKQQTPKIQKGGNLKPL. The segment covering 39–51 has biased composition (low complexity); that stretch reads PQQTQSSKQQTPK. Residues His-119, Asp-161, and Ser-237 each act as charge relay system in the active site. Positions 283 to 336 are disordered; sequence FANDDQPNNPDNPDNPNNPDNPNNPDEPNNPDNPNNPDNPDNGDTNNSDNPDAA. A compositionally biased stretch (low complexity) spans 286 to 336; it reads DDQPNNPDNPDNPNNPDNPNNPDEPNNPDNPNNPDNPDNGDTNNSDNPDAA. 11 tandem repeats follow at residues 289–291, 292–294, 295–297, 298–300, 301–303, 304–306, 310–312, 313–315, 316–318, 319–321, and 322–324. Residues 289 to 324 are 11 X 3 AA repeats of P-[DN]-N; the sequence is PNNPDNPDNPNNPDNPNNPDEPNNPDNPNNPDNPDN.

The protein belongs to the peptidase S1B family. Post-translationally, proteolytically cleaved by aureolysin (aur). This cleavage leads to the activation of SspA.

The protein localises to the secreted. It catalyses the reaction Preferential cleavage: Glu-|-Xaa, Asp-|-Xaa.. Functionally, preferentially cleaves peptide bonds on the carboxyl-terminal side of aspartate and glutamate. Along with other extracellular proteases it is involved in colonization and infection of human tissues. Required for proteolytic maturation of thiol protease SspB and inactivation of SspC, an inhibitor of SspB. It is the most important protease for degradation of fibronectin-binding protein (FnBP) and surface protein A, which are involved in adherence to host cells. May also protect bacteria against host defense mechanism by cleaving the immunoglobulin classes IgG, IgA and IgM. May be involved in the stability of secreted lipases. The chain is Glutamyl endopeptidase (sspA) from Staphylococcus aureus (strain COL).